A 347-amino-acid polypeptide reads, in one-letter code: N-acetyl-gamma-glutamyl-phosphate reductase (347 aa).

Cysteine 151 is an active-site residue.

The protein belongs to the NAGSA dehydrogenase family. Type 1 subfamily.

The protein localises to the cytoplasm. The enzyme catalyses N-acetyl-L-glutamate 5-semialdehyde + phosphate + NADP(+) = N-acetyl-L-glutamyl 5-phosphate + NADPH + H(+). Its pathway is amino-acid biosynthesis; L-arginine biosynthesis; N(2)-acetyl-L-ornithine from L-glutamate: step 3/4. In terms of biological role, catalyzes the NADPH-dependent reduction of N-acetyl-5-glutamyl phosphate to yield N-acetyl-L-glutamate 5-semialdehyde. The chain is N-acetyl-gamma-glutamyl-phosphate reductase from Pelotomaculum thermopropionicum (strain DSM 13744 / JCM 10971 / SI).